A 118-amino-acid chain; its full sequence is Eukaryotic translation initiation factor 4E-binding protein 1 (118 aa).

2 stretches are compositionally biased toward polar residues: residues 1 to 12 (MSGGSSCSQTPS) and 34 to 48 (YSTT…TTPG). Disordered regions lie at residues 1–20 (MSGG…ATRR) and 25–48 (DGVQ…TTPG). Ser-2 carries the post-translational modification N-acetylserine. Thr-37 bears the Phosphothreonine; by MTOR mark. Thr-41 is subject to Phosphothreonine. Ser-44 carries the post-translational modification Phosphoserine. Thr-46 is subject to Phosphothreonine; by MTOR. At Thr-50 the chain carries Phosphothreonine. Tyr-54 is modified (phosphotyrosine). The short motif at 54–60 (YDRKFLM) is the YXXXXLphi motif element. A Glycyl lysine isopeptide (Lys-Gly) (interchain with G-Cter in ubiquitin) cross-link involves residue Lys-57. The segment at 64–118 (NSPVTKTPPRDLPTIPGVTSPSSDEPPMEASQSHLRNSPEDKRAGGEESQFEMDI) is disordered. Ser-65 is modified (phosphoserine; by DYRK2, MAPK1, MAPK3 and MTOR). At Thr-70 the chain carries Phosphothreonine; by MTOR. Position 77 is a phosphothreonine (Thr-77). 2 positions are modified to phosphoserine: Ser-83 and Ser-96. A compositionally biased stretch (basic and acidic residues) spans 100–109 (NSPEDKRAGG). The residue at position 101 (Ser-101) is a Phosphoserine; by DYRK2. Ser-112 bears the Phosphoserine mark. A TOS motif motif is present at residues 114-118 (FEMDI).

This sequence belongs to the eIF4E-binding protein family. In terms of assembly, hypophosphorylated EIF4EBP1 competes with EIF4G1/EIF4G3 to interact with EIF4E; insulin stimulated MAP-kinase (MAPK1 and MAPK3) or mTORC1 phosphorylation of EIF4EBP1 causes dissociation of the complex allowing EIF4G1/EIF4G3 to bind and consequent initiation of translation. Interacts (via TOS motif) with RPTOR; promoting phosphorylation by mTORC1. In terms of processing, phosphorylated on serine and threonine residues in response to insulin, EGF and PDGF. Phosphorylation at Thr-37, Thr-46, Ser-65 and Thr-70, corresponding to the hyperphosphorylated form, is regulated by mTORC1 and abolishes binding to EIF4E. Post-translationally, ubiquitinated: when eIF4E levels are low, hypophosphorylated form is ubiquitinated by the BCR(KLHL25) complex, leading to its degradation and serving as a homeostatic mechanism to maintain translation and prevent eIF4E inhibition when eIF4E levels are low. Not ubiquitinated when hyperphosphorylated (at Thr-37, Thr-46, Ser-65 and Thr-70) or associated with eIF4E.

It localises to the cytoplasm. It is found in the nucleus. Its function is as follows. Repressor of translation initiation that regulates EIF4E activity by preventing its assembly into the eIF4F complex: hypophosphorylated form competes with EIF4G1/EIF4G3 and strongly binds to EIF4E, leading to repress translation. In contrast, hyperphosphorylated form dissociates from EIF4E, allowing interaction between EIF4G1/EIF4G3 and EIF4E, leading to initiation of translation. Mediates the regulation of protein translation by hormones, growth factors and other stimuli that signal through the MAP kinase and mTORC1 pathways. The polypeptide is Eukaryotic translation initiation factor 4E-binding protein 1 (EIF4EBP1) (Homo sapiens (Human)).